Reading from the N-terminus, the 217-residue chain is Ras-related protein Rab-19 (217 aa).

Residues serine 26, valine 28, glycine 29, lysine 30, threonine 31, cysteine 32, tyrosine 42, glutamate 44, and threonine 49 each contribute to the GTP site. Mg(2+) is bound at residue threonine 31. Residues 39–54 (SGVYMEAQQNTIGVDF) carry the Switch 1 motif. Mg(2+) is bound by residues threonine 49 and aspartate 72. A Switch 2 motif is present at residues 74 to 89 (AGQERFRTITQSYYRS). Positions 75, 130, 131, 133, 161, 162, and 163 each coordinate GTP. S-geranylgeranyl cysteine attachment occurs at residues cysteine 215 and cysteine 217. Cysteine 217 bears the Cysteine methyl ester mark.

The protein belongs to the small GTPase superfamily. Rab family. Mg(2+) is required as a cofactor.

Its subcellular location is the cell membrane. It carries out the reaction GTP + H2O = GDP + phosphate + H(+). Regulated by guanine nucleotide exchange factors (GEFs) which promote the exchange of bound GDP for free GTP. Regulated by GTPase activating proteins (GAPs) which increase the GTP hydrolysis activity. Inhibited by GDP dissociation inhibitors (GDIs). Functionally, the small GTPases Rab are key regulators of intracellular membrane trafficking, from the formation of transport vesicles to their fusion with membranes. Rabs cycle between an inactive GDP-bound form and an active GTP-bound form that is able to recruit to membranes different set of downstream effectors directly responsible for vesicle formation, movement, tethering and fusion. In Bos taurus (Bovine), this protein is Ras-related protein Rab-19 (RAB19).